A 156-amino-acid polypeptide reads, in one-letter code: dCTP deaminase (156 aa).

Residues 79–84 (RSSLAR), aspartate 95, glutamine 124, and tyrosine 138 contribute to the dCTP site.

Belongs to the dCTP deaminase family. As to quaternary structure, homotrimer.

The catalysed reaction is dCTP + H2O + H(+) = dUTP + NH4(+). The protein operates within pyrimidine metabolism; dUMP biosynthesis; dUMP from dCTP (dUTP route): step 1/2. Functionally, catalyzes the deamination of dCTP to dUTP. In Pyrococcus horikoshii (strain ATCC 700860 / DSM 12428 / JCM 9974 / NBRC 100139 / OT-3), this protein is dCTP deaminase.